We begin with the raw amino-acid sequence, 104 residues long: Putative thioredoxin-4 (104 aa).

The Thioredoxin domain maps to 2–104 (SKVTNVSINT…QLRKILDSMK (103 aa)). Residues cysteine 31 and cysteine 34 each act as nucleophile in the active site. A disulfide bond links cysteine 31 and cysteine 34.

The protein belongs to the thioredoxin family.

Its function is as follows. Participates in various redox reactions through the reversible oxidation of its active center dithiol to a disulfide and catalyzes dithiol-disulfide exchange reactions. The chain is Putative thioredoxin-4 (trxD) from Dictyostelium discoideum (Social amoeba).